A 1176-amino-acid polypeptide reads, in one-letter code: Leucine--tRNA ligase, cytoplasmic (1176 aa).

Tyr-52 and Tyr-54 together coordinate L-leucine. Positions 60–63 (HLGH) match the 'HIGH' region motif. Residues 115 to 142 (PDFPDEEDEEEETNVKTEDTRIKDKAKG) are disordered. The span at 117–126 (FPDEEDEEEE) shows a compositional bias: acidic residues. The segment covering 127–139 (TNVKTEDTRIKDK) has biased composition (basic and acidic residues). Ser-167 is modified (phosphoserine). The segment at 260–509 (GPQEYTLLKL…DAGDALIYME (250 aa)) is editing domain. Positions 594 and 597 each coordinate L-leucine. Positions 716–720 (KMSKS) match the 'KMSKS' region motif. Lys-719 contacts ATP. The residue at position 720 (Ser-720) is a Phosphoserine. Residues Lys-970 and Lys-1047 each carry the N6-acetyllysine modification.

It belongs to the class-I aminoacyl-tRNA synthetase family.

It localises to the cytoplasm. It carries out the reaction tRNA(Leu) + L-leucine + ATP = L-leucyl-tRNA(Leu) + AMP + diphosphate. The enzyme catalyses L-methionyl-tRNA(Leu) + H2O = tRNA(Leu) + L-methionine + H(+). 5-fluoro-1,3-dihydro-1-hydroxy-1,2-benzoxaborole inhibits LARS1 by forming a covalent adduct with the 3' adenosine of tRNA(Leu) at the editing site, thus locking the enzyme in an inactive conformation. Aminoacyl-tRNA synthetase that catalyzes the specific attachment of leucine to its cognate tRNA (tRNA(Leu)). It performs tRNA aminoacylation in a two-step reaction: Leu is initially activated by ATP to form a leucyl-adenylate (Leu-AMP) intermediate; then the leucyl moiety is transferred to the acceptor 3' end of the tRNA to yield leucyl-tRNA. To improve the fidelity of catalytic reactions, it is also able to hydrolyze misactivated aminoacyl-adenylate intermediates (pre-transfer editing) and mischarged aminoacyl-tRNAs (post-transfer editing). In Pongo abelii (Sumatran orangutan), this protein is Leucine--tRNA ligase, cytoplasmic (LARS1).